The chain runs to 597 residues: Elongation factor 4 (597 aa).

The 183-residue stretch at 2-184 folds into the tr-type G domain; that stretch reads QHIRNFSIIA…TIVARVPAPQ (183 aa). GTP is bound by residues 14–19 and 131–134; these read DHGKST and NKMD.

It belongs to the TRAFAC class translation factor GTPase superfamily. Classic translation factor GTPase family. LepA subfamily.

Its subcellular location is the cell inner membrane. It carries out the reaction GTP + H2O = GDP + phosphate + H(+). Required for accurate and efficient protein synthesis under certain stress conditions. May act as a fidelity factor of the translation reaction, by catalyzing a one-codon backward translocation of tRNAs on improperly translocated ribosomes. Back-translocation proceeds from a post-translocation (POST) complex to a pre-translocation (PRE) complex, thus giving elongation factor G a second chance to translocate the tRNAs correctly. Binds to ribosomes in a GTP-dependent manner. The chain is Elongation factor 4 from Bordetella petrii (strain ATCC BAA-461 / DSM 12804 / CCUG 43448).